A 320-amino-acid polypeptide reads, in one-letter code: MMIKTRFSRWLTFFTFAAAVALALPAKANTWPLPPAGSRLVGENKFHVVENDGGSLEAIAKKYNVGFLALLQANPGVDPYVPRAGSVLTIPLQTLLPDAPREGIVINIAELRLYYYPPGKNSVTVYPIGIGQLGGDTLTPTMVTTVSDKRANPTWTPTANIRARYKAQGIELPAVVPAGLDNPMGHHAIRLAAYGGVYLLHGTNADFGIGMRVSSGCIRLRDDDIKTLFSQVTPGTKVNIINTPIKVSAEPNGARLVEVHQPLSEKIDDDPQLLPITLNSAMQSFKDAAQTDAEVMQHVMDVRSGMPVDVRRHQVSPQTL.

Residues 1 to 23 (MMIKTRFSRWLTFFTFAAAVALA) form the signal peptide. The region spanning 45–90 (KFHVVENDGGSLEAIAKKYNVGFLALLQANPGVDPYVPRAGSVLTI) is the LysM domain. The L,D-TPase catalytic domain occupies 102 to 241 (EGIVINIAEL…VTPGTKVNII (140 aa)). The active-site Proton donor/acceptor is the histidine 201. Catalysis depends on cysteine 217, which acts as the Nucleophile.

This sequence belongs to the YkuD family. Interacts with DsbG.

Its subcellular location is the periplasm. Its pathway is cell wall biogenesis; peptidoglycan biosynthesis. Its function is as follows. Responsible, at least in part, for anchoring of the major outer membrane lipoprotein (Lpp, also known as the Braun lipoprotein) to the peptidoglycan via a meso-diaminopimelyl-L-Lys- bond on the terminal residue of Lpp. This chain is Probable L,D-transpeptidase YcfS (ycfS), found in Escherichia coli (strain K12).